Reading from the N-terminus, the 274-residue chain is Cytochrome b-c1 complex subunit Rieske, mitochondrial (274 aa).

Over 79–103 (SHTDIKVPDFSDYRRPEVLDSTKSS) the chain is Mitochondrial matrix. Residues 104–140 (KESSEARKGFSYLVTATTTVGVAYAAKNVVSQFVSSM) traverse the membrane as a helical segment. Residues 141 to 274 (SASADVLAMS…FTSDDMVIVG (134 aa)) lie on the Mitochondrial intermembrane side of the membrane. Positions 187-272 (EAAVEVSQLR…YEFTSDDMVI (86 aa)) constitute a Rieske domain. Positions 217, 219, 236, 239, and 241 each coordinate [2Fe-2S] cluster. A disulfide bridge connects residues C222 and C238.

It belongs to the Rieske iron-sulfur protein family. In terms of assembly, component of the ubiquinol-cytochrome c oxidoreductase (cytochrome b-c1 complex, complex III, CIII), a multisubunit enzyme composed of 11 subunits. The complex is composed of 3 respiratory subunits cytochrome b, cytochrome c1 and Rieske protein UQCRFS1, 2 core protein subunits UQCRC1/QCR1 and UQCRC2/QCR2, and 6 low-molecular weight protein subunits UQCRH/QCR6, UQCRB/QCR7, UQCRQ/QCR8, UQCR10/QCR9, UQCR11/QCR10 and subunit 9, the cleavage product of Rieske protein UQCRFS1. The complex exists as an obligatory dimer and forms supercomplexes (SCs) in the inner mitochondrial membrane with NADH-ubiquinone oxidoreductase (complex I, CI) and cytochrome c oxidase (complex IV, CIV), resulting in different assemblies (supercomplex SCI(1)III(2)IV(1) and megacomplex MCI(2)III(2)IV(2)). Incorporation of the Rieske protein UQCRFS1 is the penultimate step in complex III assembly. Interacts with TTC19, which is involved in the clearance of UQCRFS1 fragments. As to quaternary structure, component of the ubiquinol-cytochrome c oxidoreductase (cytochrome b-c1 complex, complex III, CIII). Subunit 9 corresponds to the mitochondrial targeting sequence (MTS) of Rieske protein UQCRFS1. It is retained after processing and incorporated inside complex III, where it remains bound to the complex and localizes between the 2 core subunits UQCRC1/QCR1 and UQCRC2/QCR2. It depends on [2Fe-2S] cluster as a cofactor. In terms of processing, proteolytic processing is necessary for the correct insertion of UQCRFS1 in the complex III dimer. Several fragments are generated during UQCRFS1 insertion, most probably due to the endogenous matrix-processing peptidase (MPP) activity of the 2 core protein subunits UQCRC1/QCR1 and UQCRC2/QCR2, which are homologous to the 2 mitochondrial-processing peptidase (MPP) subunits beta-MPP and alpha-MPP respectively. The action of the protease is also necessary for the clearance of the UQCRFS1 fragments.

The protein localises to the mitochondrion inner membrane. It carries out the reaction a quinol + 2 Fe(III)-[cytochrome c](out) = a quinone + 2 Fe(II)-[cytochrome c](out) + 2 H(+)(out). Its function is as follows. Component of the ubiquinol-cytochrome c oxidoreductase, a multisubunit transmembrane complex that is part of the mitochondrial electron transport chain which drives oxidative phosphorylation. The respiratory chain contains 3 multisubunit complexes succinate dehydrogenase (complex II, CII), ubiquinol-cytochrome c oxidoreductase (cytochrome b-c1 complex, complex III, CIII) and cytochrome c oxidase (complex IV, CIV), that cooperate to transfer electrons derived from NADH and succinate to molecular oxygen, creating an electrochemical gradient over the inner membrane that drives transmembrane transport and the ATP synthase. The cytochrome b-c1 complex catalyzes electron transfer from ubiquinol to cytochrome c, linking this redox reaction to translocation of protons across the mitochondrial inner membrane, with protons being carried across the membrane as hydrogens on the quinol. In the process called Q cycle, 2 protons are consumed from the matrix, 4 protons are released into the intermembrane space and 2 electrons are passed to cytochrome c. The Rieske protein is a catalytic core subunit containing a [2Fe-2S] iron-sulfur cluster. It cycles between 2 conformational states during catalysis to transfer electrons from the quinol bound in the Q(0) site in cytochrome b to cytochrome c1. Incorporation of UQCRFS1 is the penultimate step in complex III assembly. Component of the ubiquinol-cytochrome c oxidoreductase (cytochrome b-c1 complex, complex III, CIII). UQCRFS1 undergoes proteolytic processing once it is incorporated in the complex III dimer. One of the fragments, called subunit 9, corresponds to its mitochondrial targeting sequence (MTS). The proteolytic processing is necessary for the correct insertion of UQCRFS1 in the complex III dimer, but the persistence of UQCRFS1-derived fragments may prevent newly imported UQCRFS1 to be processed and assembled into complex III and is detrimental for the complex III structure and function. The chain is Cytochrome b-c1 complex subunit Rieske, mitochondrial (UQCRFS1) from Bos taurus (Bovine).